A 318-amino-acid polypeptide reads, in one-letter code: Thymidylate synthase (318 aa).

DUMP-binding positions include Arg-25 and 180–181 (RR). Residue Cys-200 is the Nucleophile of the active site. DUMP is bound by residues 220-223 (RSGD), Asn-231, and 261-263 (HIY). Asp-223 is a binding site for (6R)-5,10-methylene-5,6,7,8-tetrahydrofolate. Residue Ala-317 coordinates (6R)-5,10-methylene-5,6,7,8-tetrahydrofolate.

Belongs to the thymidylate synthase family. Bacterial-type ThyA subfamily. Homodimer.

The protein resides in the cytoplasm. The enzyme catalyses dUMP + (6R)-5,10-methylene-5,6,7,8-tetrahydrofolate = 7,8-dihydrofolate + dTMP. Its pathway is pyrimidine metabolism; dTTP biosynthesis. Functionally, catalyzes the reductive methylation of 2'-deoxyuridine-5'-monophosphate (dUMP) to 2'-deoxythymidine-5'-monophosphate (dTMP) while utilizing 5,10-methylenetetrahydrofolate (mTHF) as the methyl donor and reductant in the reaction, yielding dihydrofolate (DHF) as a by-product. This enzymatic reaction provides an intracellular de novo source of dTMP, an essential precursor for DNA biosynthesis. In Lactobacillus gasseri (strain ATCC 33323 / DSM 20243 / BCRC 14619 / CIP 102991 / JCM 1131 / KCTC 3163 / NCIMB 11718 / NCTC 13722 / AM63), this protein is Thymidylate synthase.